Here is a 31-residue protein sequence, read N- to C-terminus: Cytochrome b6-f complex subunit 6 (31 aa).

Residues 3–23 form a helical membrane-spanning segment; that stretch reads AIVAYIGFLALFTGIAAGLLF.

This sequence belongs to the PetL family. As to quaternary structure, the 4 large subunits of the cytochrome b6-f complex are cytochrome b6, subunit IV (17 kDa polypeptide, PetD), cytochrome f and the Rieske protein, while the 4 small subunits are PetG, PetL, PetM and PetN. The complex functions as a dimer.

Its subcellular location is the cellular thylakoid membrane. Functionally, component of the cytochrome b6-f complex, which mediates electron transfer between photosystem II (PSII) and photosystem I (PSI), cyclic electron flow around PSI, and state transitions. PetL is important for photoautotrophic growth as well as for electron transfer efficiency and stability of the cytochrome b6-f complex. The protein is Cytochrome b6-f complex subunit 6 of Nostoc sp. (strain PCC 7120 / SAG 25.82 / UTEX 2576).